Here is a 103-residue protein sequence, read N- to C-terminus: Small ribosomal subunit protein uS10 (103 aa).

The protein belongs to the universal ribosomal protein uS10 family. Part of the 30S ribosomal subunit.

Functionally, involved in the binding of tRNA to the ribosomes. This chain is Small ribosomal subunit protein uS10, found in Thioalkalivibrio sulfidiphilus (strain HL-EbGR7).